Consider the following 415-residue polypeptide: Diaminopimelate decarboxylase (415 aa).

Lysine 60 is subject to N6-(pyridoxal phosphate)lysine. Residues glycine 239 and glutamate 273–arginine 276 contribute to the pyridoxal 5'-phosphate site. Residues arginine 276, arginine 312, and tyrosine 316 each coordinate substrate. Cysteine 342 serves as the catalytic Proton donor. The substrate site is built by glutamate 343 and tyrosine 370. Tyrosine 370 is a pyridoxal 5'-phosphate binding site.

The protein belongs to the Orn/Lys/Arg decarboxylase class-II family. LysA subfamily. In terms of assembly, homodimer. Pyridoxal 5'-phosphate serves as cofactor.

The catalysed reaction is meso-2,6-diaminopimelate + H(+) = L-lysine + CO2. The protein operates within amino-acid biosynthesis; L-lysine biosynthesis via DAP pathway; L-lysine from DL-2,6-diaminopimelate: step 1/1. In terms of biological role, specifically catalyzes the decarboxylation of meso-diaminopimelate (meso-DAP) to L-lysine. The chain is Diaminopimelate decarboxylase from Pseudomonas aeruginosa (strain ATCC 15692 / DSM 22644 / CIP 104116 / JCM 14847 / LMG 12228 / 1C / PRS 101 / PAO1).